A 301-amino-acid chain; its full sequence is Rhodopsin (301 aa).

At 1-18 (LHMIHLHWYQYPPMNPMM) the chain is on the extracellular side. Residues 19 to 43 (YPLLLIFMLFTGILCLAGNFVTIWV) traverse the membrane as a helical segment. Over 44–55 (FMNTKSLRTPAN) the chain is Cytoplasmic. The helical transmembrane segment at 56 to 78 (LLVVNLAMSDFLMMFTMFPPMMV) threads the bilayer. The Extracellular segment spans residues 79-92 (TCYYHTWTLGPTFC). Cysteine 92 and cysteine 169 are oxidised to a cystine. A helical membrane pass occupies residues 93–115 (QVYGFLGNLCGCASIWTMVFITF). Positions 116–118 (DRY) match the 'Ionic lock' involved in activated form stabilization motif. The Cytoplasmic segment spans residues 116-134 (DRYNVIVKGVAGEPLSTKK). Residues 135–155 (ASLWILIVWVLSLAWCMAPFF) traverse the membrane as a helical segment. The Extracellular segment spans residues 156 to 182 (GWNRYVPEGNLTGCGTDYLSEDILSRS). Asparagine 165 carries an N-linked (GlcNAc...) asparagine glycan. The helical transmembrane segment at 183 to 204 (YLYIYSTWVYFLPLTITIYCYV) threads the bilayer. Topologically, residues 205–245 (FIIKAVAAHEKGMRDQAKKMGIKSLRNEEAQKTSAECRLAK) are cytoplasmic. The chain crosses the membrane as a helical span at residues 246 to 267 (IAMTTVALWFIAWTPYLLINWV). Over 268–278 (GMFARSYLSPV) the chain is Extracellular. A helical transmembrane segment spans residues 279-300 (YTIWGYVFAKANAVYNPIVYAI). Lysine 288 is subject to N6-(retinylidene)lysine.

It belongs to the G-protein coupled receptor 1 family. Opsin subfamily. As to quaternary structure, homodimer. Interacts with GNAQ. Contains one covalently linked retinal chromophore.

It localises to the cell projection. Its subcellular location is the rhabdomere membrane. Its function is as follows. Photoreceptor required for image-forming vision at low light intensity. Can use both retinal and 3-dehydroretinal as visual pigment. Light-induced isomerization of 11-cis to all-trans retinal triggers a conformational change that activates signaling via G-proteins. Signaling via GNAQ probably mediates the activation of phospholipase C. The chain is Rhodopsin (RHO) from Procambarus milleri (Miami cave crayfish).